The primary structure comprises 200 residues: MTTHRKPSQEQGFLNGQFLLAMPGMSDERFARSVVYICAHSDEGAMGFIINQLQPVQFPDLLRQIGVIGEEDLIILPDRAQHMVVRNGGPVDRTRGFVLHSDDYMVDSTMPVSDDVCLTATVDILRAIYGGGGPERALMALGYSGWAPGQLEMEVAENGWLTCDAPLDMLFDSDIEGKYSRLMLHMGIDMSRLVSDAGHA.

This sequence belongs to the UPF0301 (AlgH) family.

The protein is UPF0301 protein BR0480/BS1330_I0481 of Brucella suis biovar 1 (strain 1330).